Here is a 148-residue protein sequence, read N- to C-terminus: Putative carbonic anhydrase (148 aa).

Positions 1–146 (CLKRLQPGEM…LNGRTVFEVH (146 aa)) constitute an Alpha-carbonic anhydrase domain.

Belongs to the alpha-carbonic anhydrase family. The cofactor is Zn(2+). As to expression, component of the acid-insoluble organic matrix of the aragonitic skeleton (at protein level).

It localises to the secreted. The enzyme catalyses hydrogencarbonate + H(+) = CO2 + H2O. Reversible hydration of carbon dioxide. In Acropora millepora (Staghorn coral), this protein is Putative carbonic anhydrase.